Consider the following 126-residue polypeptide: Large ribosomal subunit protein uL22 (126 aa).

Belongs to the universal ribosomal protein uL22 family. In terms of assembly, part of the 50S ribosomal subunit.

Its function is as follows. This protein binds specifically to 23S rRNA; its binding is stimulated by other ribosomal proteins, e.g. L4, L17, and L20. It is important during the early stages of 50S assembly. It makes multiple contacts with different domains of the 23S rRNA in the assembled 50S subunit and ribosome. In terms of biological role, the globular domain of the protein is located near the polypeptide exit tunnel on the outside of the subunit, while an extended beta-hairpin is found that lines the wall of the exit tunnel in the center of the 70S ribosome. The protein is Large ribosomal subunit protein uL22 of Ruegeria sp. (strain TM1040) (Silicibacter sp.).